The chain runs to 438 residues: UPF0229 protein NGR_c12350 (438 aa).

Positions 1-16 are enriched in basic and acidic residues; it reads MPNFIDRRLNPKDKSL. Disordered stretches follow at residues 1-20 and 83-107; these read MPNFIDRRLNPKDKSLGNRQ and FAAGDRLPKRSSGGGATGAGAGTGQ. The segment covering 94–105 has biased composition (gly residues); sequence SGGGATGAGAGT.

The protein belongs to the UPF0229 family.

The polypeptide is UPF0229 protein NGR_c12350 (Sinorhizobium fredii (strain NBRC 101917 / NGR234)).